The chain runs to 209 residues: Ribonuclease HII (209 aa).

The 185-residue stretch at arginine 25–leucine 209 folds into the RNase H type-2 domain. Residues aspartate 31, glutamate 32, and aspartate 123 each contribute to the a divalent metal cation site.

It belongs to the RNase HII family. It depends on Mn(2+) as a cofactor. The cofactor is Mg(2+).

Its subcellular location is the cytoplasm. The catalysed reaction is Endonucleolytic cleavage to 5'-phosphomonoester.. Its function is as follows. Endonuclease that specifically degrades the RNA of RNA-DNA hybrids. The sequence is that of Ribonuclease HII from Syntrophotalea carbinolica (strain DSM 2380 / NBRC 103641 / GraBd1) (Pelobacter carbinolicus).